We begin with the raw amino-acid sequence, 1513 residues long: MICQLLWHEHNSMGSGREKKIRKLGDNFSLPYLKFDCDHNDKNYRASNRPFGLSTGLSVQLNASNMTDPFKFLLDNWHTIFKNGAIKLLPPEGWQIPVVLDQGAFEFQSKRQCLNKGCLNYEKNYDYFKKLKAFHESRGLYFYHPPIIGNRPVDFLRLRNAISKFTNSGSSLNNEILHKVIIYLRLEDTKEVRQVLTRCYDRYIKPFERDSSPSFKSKRSESSTRKIRNTRSSAQQESPIPETSAQSPVQTIQVNGSTSLKRPLIERGEQCEYCGLDKNPETILLCDGCEAAYHTSCLDPPLTSIPKEDWYCDACKFNISDYDPRKGFKWKLSSLKERSAEIFNTLGERNSSSKLTNLTEDDIELFYWSSLAESNSGFAPLELEGLSQAYTSTIQSSLPSKEVFPLEKYSSEPWNLHNLPFENPCLFNYSFSDLSSLTITRLSIGMVFYTHGWTKSSLSTGLLHHHRFGDTVTWYVLPPDESDAFERYLISSYPQYTMEDLNRSNGLPVIVSPSSLIENGFHPIAIDLRPNEFLVVSPNSYHMGFHQGFSSFESVNFATVNWIKDGLLNSSISVLKSMRIPSSVSYEAVIISMVLSKNPCFSSEWLIKCFEDMIANESASKNEIMKLVPNIQALKLESSVPLEIRCSNCKQPCFLSFMQCHEPKKFICLGDCVKEVSLNATSWMLFYRWDVHELSNLAERFVSLIRGPEEWTNRLRSVLSTSPKPQLKVLKSLLVDAEKAMLTTPETVNLRDFVQNANSWIDSVNECLKVASLKRKKDKKPPLFKAHDHWNNTSNLKDSAVLFKVLQTSRSMAFTCQEIENMKQKAFDLLEFRNRLINSFSGPLDKNTCQRLLTEAELLGFTIPELGIIQKYLIQFEWLDMFYSFETTRTTDSDLERLITYGVSAGIPEDNDYMIFAKAMKGRAEIWENQVYDTLSKSNISYDKLSLLRDEAMNLCVNKELFSKVVGILNNAEEIKNKIATLCERSQEKDFALRPSIDEVKEALASAEKLPILSESTVTLQKMYDVVLEWIRRGKRLFGKANAPLEILGQHLDYVEKRNSASLSLNDRPGPPMEPASRETSPDSEGRLTIRKKKGCIFCFCRLPESGVMIECEICHEWYHAKCLKMSKKKLRQDEKFTCPICDYRVEIPRLSNRPKLEDLQSLYKDVKLLPFQPKETETLRKVVDLASKFRQEMQALAHNPFGLTMAEVPLARFYLRKMEGAEILLVDETNLFRQKLHECVPIAPNPPPIIGESKSTRKPRPTKRQRQIMKQVAEGLLPASAIAPPKSSNEKKSSNNVKAVEAETKSKSEKSPKKNGTNISDANNKNESHVSLMKNWKLGSPAFVTLVKEKNSSCLCGEEFSPRDSFIDCTICERRFHYDCVGLNNEIADSVSKFTCPICMEQSGGIYPWQLRPRNGMHPDHISGFSKEVETDPKLGSSGYTLNNSKFDKAAVSKTLSAQDVSRLQKVSCGEHLYFGTDVFTPLGDMATSASMFSLDDSSEKTDAFTENFLNV.

Residues 56–97 enclose the JmjN domain; the sequence is GLSVQLNASNMTDPFKFLLDNWHTIFKNGAIKLLPPEGWQIP. An ARID domain is found at 121 to 212; it reads YEKNYDYFKK…YIKPFERDSS (92 aa). The disordered stretch occupies residues 211 to 253; it reads SSPSFKSKRSESSTRKIRNTRSSAQQESPIPETSAQSPVQTIQ. A compositionally biased stretch (polar residues) spans 230–253; it reads TRSSAQQESPIPETSAQSPVQTIQ. Residues 268–318 form a PHD-type 1 zinc finger; the sequence is GEQCEYCGLDKNPETILLCDGCEAAYHTSCLDPPLTSIPKEDWYCDACKFN. The JmjC domain occupies 408–574; the sequence is KYSSEPWNLH…DGLLNSSISV (167 aa). Ser-722 is modified (phosphoserine). A disordered region spans residues 1063–1086; it reads LSLNDRPGPPMEPASRETSPDSEG. Over residues 1076 to 1086 the composition is skewed to basic and acidic residues; sequence ASRETSPDSEG. Residues 1093–1145 form a PHD-type 2 zinc finger; the sequence is KKGCIFCFCRLPESGVMIECEICHEWYHAKCLKMSKKKLRQDEKFTCPICDYR. The RING-type 1; degenerate zinc finger occupies 1096–1143; the sequence is CIFCFCRLPESGVMIECEICHEWYHAKCLKMSKKKLRQDEKFTCPICD. Disordered regions lie at residues 1244–1268 and 1280–1327; these read APNP…RQRQ and ASAI…NNKN. A compositionally biased stretch (basic residues) spans 1257–1268; the sequence is TRKPRPTKRQRQ. Residues 1301 to 1313 are compositionally biased toward basic and acidic residues; that stretch reads VEAETKSKSEKSP. A compositionally biased stretch (polar residues) spans 1316-1326; the sequence is NGTNISDANNK. The PHD-type 3 zinc-finger motif lies at 1352-1403; the sequence is NSSCLCGEEFSPRDSFIDCTICERRFHYDCVGLNNEIADSVSKFTCPICMEQ. The segment at 1354 to 1401 adopts an RING-type 2; degenerate zinc-finger fold; the sequence is SCLCGEEFSPRDSFIDCTICERRFHYDCVGLNNEIADSVSKFTCPICM.

Component of the Lid2 complex composed of ash2, jmj3, lid2, sdc1 and snt2.

The protein localises to the nucleus. The protein is Lid2 complex component lid2 (lid2) of Schizosaccharomyces pombe (strain 972 / ATCC 24843) (Fission yeast).